Here is a 383-residue protein sequence, read N- to C-terminus: Ceramide synthase 3 (383 aa).

A helical membrane pass occupies residues 32–52; that stretch reads VFVKPSHLYVTIPYAFLLLII. Residues 66-127 form a homeobox-like region; sequence KSFGIKETVR…RSRRNQERPS (62 aa). Positions 130–331 constitute a TLC domain; sequence KKFQEACWRF…ILKMLNRCIF (202 aa). Transmembrane regions (helical) follow at residues 139-159, 174-194, 205-225, 264-284, and 298-318; these read FAFY…KPWL, LLPS…SLLF, FLAH…SWCA, FFIF…FWIL, and FFSY…HLYW. At 319 to 383 the chain is on the cytoplasmic side; sequence GYYILKMLNR…HLIPNGQHGH (65 aa). Ser-340 is modified (phosphoserine). Over residues 342–355 the composition is skewed to acidic residues; it reads DEDYEEEEEEEEEE. The disordered stretch occupies residues 342–363; sequence DEDYEEEEEEEEEEATKGKEMD.

As to expression, expressed in the epidermis, where it localizes at the interface between the stratum granulosum and the stratum corneum (at protein level).

It localises to the endoplasmic reticulum membrane. The enzyme catalyses a very long-chain fatty acyl-CoA + a sphingoid base = an N-(very-long-chain fatty acyl)-sphingoid base + CoA + H(+). It carries out the reaction docosanoyl-CoA + sphinganine = N-docosanoylsphinganine + CoA + H(+). It catalyses the reaction tetracosanoyl-CoA + sphinganine = N-tetracosanoylsphinganine + CoA + H(+). The catalysed reaction is hexacosanoyl-CoA + sphinganine = N-hexacosanoylsphinganine + CoA + H(+). The enzyme catalyses 2-hydroxydocosanoyl-CoA + sphinganine = N-(2-hydroxydocosanoyl)-sphinganine + CoA + H(+). It carries out the reaction 2-hydroxytetracosanoyl-CoA + sphinganine = N-(2-hydroxytetracosanoyl)-sphinganine + CoA + H(+). It catalyses the reaction an ultra-long-chain fatty acyl-CoA + a sphingoid base = an N-(ultra-long-chain-acyl)-sphingoid base + CoA + H(+). The catalysed reaction is octacosanoyl-CoA + sphinganine = N-(octacosanoyl)-sphinganine + CoA + H(+). The enzyme catalyses a fatty acyl-CoA + sphing-4-enine = an N-acylsphing-4-enine + CoA + H(+). It carries out the reaction sphinganine + octadecanoyl-CoA = N-(octadecanoyl)-sphinganine + CoA + H(+). It catalyses the reaction 2-hydroxyoctadecanoyl-CoA + sphinganine = N-(2-hydroxyoctadecanoyl)-sphinganine + CoA + H(+). It participates in lipid metabolism; sphingolipid metabolism. Functionally, ceramide synthase that catalyzes the transfer of the acyl chain from acyl-CoA to a sphingoid base, with high selectivity toward very- and ultra-long-chain fatty acyl-CoA (chain length greater than C22). N-acylates sphinganine and sphingosine bases to form dihydroceramides and ceramides in de novo synthesis and salvage pathways, respectively. It is crucial for the synthesis of ultra-long-chain ceramides in the epidermis, to maintain epidermal lipid homeostasis and terminal differentiation. This is Ceramide synthase 3 from Homo sapiens (Human).